A 211-amino-acid polypeptide reads, in one-letter code: Imidazole glycerol phosphate synthase subunit HisH (211 aa).

The Glutamine amidotransferase type-1 domain occupies 3–211 (VVAVIDYEMG…VSQVREKIAA (209 aa)). Cysteine 81 (nucleophile) is an active-site residue. Catalysis depends on residues histidine 186 and glutamate 188.

Heterodimer of HisH and HisF.

It localises to the cytoplasm. The catalysed reaction is 5-[(5-phospho-1-deoxy-D-ribulos-1-ylimino)methylamino]-1-(5-phospho-beta-D-ribosyl)imidazole-4-carboxamide + L-glutamine = D-erythro-1-(imidazol-4-yl)glycerol 3-phosphate + 5-amino-1-(5-phospho-beta-D-ribosyl)imidazole-4-carboxamide + L-glutamate + H(+). It carries out the reaction L-glutamine + H2O = L-glutamate + NH4(+). It functions in the pathway amino-acid biosynthesis; L-histidine biosynthesis; L-histidine from 5-phospho-alpha-D-ribose 1-diphosphate: step 5/9. In terms of biological role, IGPS catalyzes the conversion of PRFAR and glutamine to IGP, AICAR and glutamate. The HisH subunit catalyzes the hydrolysis of glutamine to glutamate and ammonia as part of the synthesis of IGP and AICAR. The resulting ammonia molecule is channeled to the active site of HisF. This chain is Imidazole glycerol phosphate synthase subunit HisH, found in Nostoc sp. (strain PCC 7120 / SAG 25.82 / UTEX 2576).